A 427-amino-acid chain; its full sequence is Dihydroorotase (427 aa).

Histidine 58 and histidine 60 together coordinate Zn(2+). Residues 60 to 62 and asparagine 92 each bind substrate; that span reads HYR. The Zn(2+) site is built by aspartate 150, histidine 177, and histidine 230. Position 276 (asparagine 276) interacts with substrate. Aspartate 303 contacts Zn(2+). Aspartate 303 is an active-site residue. Residues histidine 307 and 321-322 contribute to the substrate site; that span reads FG.

This sequence belongs to the metallo-dependent hydrolases superfamily. DHOase family. Class I DHOase subfamily. Zn(2+) serves as cofactor.

The enzyme catalyses (S)-dihydroorotate + H2O = N-carbamoyl-L-aspartate + H(+). It participates in pyrimidine metabolism; UMP biosynthesis via de novo pathway; (S)-dihydroorotate from bicarbonate: step 3/3. In terms of biological role, catalyzes the reversible cyclization of carbamoyl aspartate to dihydroorotate. In Lactobacillus leichmannii, this protein is Dihydroorotase.